The following is a 282-amino-acid chain: Energy-coupling factor transporter ATP-binding protein EcfA2 (282 aa).

Residues Met-1 to Asp-234 enclose the ABC transporter domain. Gly-28–Ser-35 lines the ATP pocket.

It belongs to the ABC transporter superfamily. Energy-coupling factor EcfA family. Forms a stable energy-coupling factor (ECF) transporter complex composed of 2 membrane-embedded substrate-binding proteins (S component), 2 ATP-binding proteins (A component) and 2 transmembrane proteins (T component).

It localises to the cell membrane. ATP-binding (A) component of a common energy-coupling factor (ECF) ABC-transporter complex. Unlike classic ABC transporters this ECF transporter provides the energy necessary to transport a number of different substrates. The polypeptide is Energy-coupling factor transporter ATP-binding protein EcfA2 (Halalkalibacterium halodurans (strain ATCC BAA-125 / DSM 18197 / FERM 7344 / JCM 9153 / C-125) (Bacillus halodurans)).